Here is a 2890-residue protein sequence, read N- to C-terminus: Bifunctional DNA-directed RNA polymerase subunit beta-beta' (2890 aa).

Positions 1–1377 (MSKKIPLKNR…DINIFGDDVD (1377 aa)) are DNA-directed RNA polymerase subunit beta. Residues 1384–2890 (PIMIKEDDRP…LRALEDNSKF (1507 aa)) are DNA-directed RNA polymerase subunit beta'. Zn(2+) contacts are provided by cysteine 1449, cysteine 1451, cysteine 1465, and cysteine 1468. Aspartate 1849, aspartate 1851, and aspartate 1853 together coordinate Mg(2+). 4 residues coordinate Zn(2+): cysteine 2179, cysteine 2253, cysteine 2260, and cysteine 2263.

It in the N-terminal section; belongs to the RNA polymerase beta chain family. The protein in the C-terminal section; belongs to the RNA polymerase beta' chain family. The RNAP catalytic core consists of 2 alpha, 1 beta/beta' and 1 omega subunit. When a sigma factor is associated with the core the holoenzyme is formed, which can initiate transcription. The cofactor is Mg(2+). It depends on Zn(2+) as a cofactor.

The catalysed reaction is RNA(n) + a ribonucleoside 5'-triphosphate = RNA(n+1) + diphosphate. Its function is as follows. DNA-dependent RNA polymerase catalyzes the transcription of DNA into RNA using the four ribonucleoside triphosphates as substrates. The sequence is that of Bifunctional DNA-directed RNA polymerase subunit beta-beta' (rpoBC) from Helicobacter pylori (strain J99 / ATCC 700824) (Campylobacter pylori J99).